The sequence spans 197 residues: Protein GrpE (197 aa).

Positions 1-40 are disordered; the sequence is MSSKEQKTPEGQAPEEIIMDQHEEIEAVEPEASAEQVDPR.

It belongs to the GrpE family. In terms of assembly, homodimer.

It localises to the cytoplasm. Functionally, participates actively in the response to hyperosmotic and heat shock by preventing the aggregation of stress-denatured proteins, in association with DnaK and GrpE. It is the nucleotide exchange factor for DnaK and may function as a thermosensor. Unfolded proteins bind initially to DnaJ; upon interaction with the DnaJ-bound protein, DnaK hydrolyzes its bound ATP, resulting in the formation of a stable complex. GrpE releases ADP from DnaK; ATP binding to DnaK triggers the release of the substrate protein, thus completing the reaction cycle. Several rounds of ATP-dependent interactions between DnaJ, DnaK and GrpE are required for fully efficient folding. This chain is Protein GrpE, found in Escherichia coli (strain K12 / DH10B).